The chain runs to 524 residues: Nuclear distribution protein PAC1 (524 aa).

Residues 65-90 (STVLRLQRKIIDLENEVGTLRSIVDG) are a coiled coil. 8 WD repeats span residues 121–160 (QQNQ…TSIP), 166–217 (AHTR…HIRT), 220–262 (GHDH…KSFT), 277–317 (NSQL…GLAL), 353–394 (IPQE…LIPH), 415–454 (GHQS…VTGS), 463–492 (GHDG…DATE), and 493–524 (EESH…KLWS).

Belongs to the WD repeat LIS1/nudF family. As to quaternary structure, self-associates. Interacts with NDL1 and dynein.

The protein localises to the cytoplasm. Its subcellular location is the cytoskeleton. It localises to the spindle pole. Its function is as follows. Positively regulates the activity of the minus-end directed microtubule motor protein dynein. Plays a central role in positioning the mitotic spindle at the bud neck during cell division. Targets cytoplasmic dynein to microtubule plus ends, thereby promoting dynein-mediated microtubule sliding along the bud cortex and consequently the movement of the mitotic spindle to the bud neck. This is Nuclear distribution protein PAC1 from Scheffersomyces stipitis (strain ATCC 58785 / CBS 6054 / NBRC 10063 / NRRL Y-11545) (Yeast).